The sequence spans 176 residues: NAD(P)H-quinone oxidoreductase subunit 6, chloroplastic (176 aa).

Transmembrane regions (helical) follow at residues 10 to 30, 32 to 52, 61 to 81, 92 to 112, and 152 to 172; these read FLLVFLGSGLLVGGLGVVLLP, PIFSAFSLGFVLVCISLLYIL, AQLLIYVGAINVLIIFAVMFM, LWTVGDGITSLVCTTILFSLI, and FFLPFELISIILLVALVGAIS.

Belongs to the complex I subunit 6 family. As to quaternary structure, NDH is composed of at least 16 different subunits, 5 of which are encoded in the nucleus.

The protein localises to the plastid. The protein resides in the chloroplast thylakoid membrane. The enzyme catalyses a plastoquinone + NADH + (n+1) H(+)(in) = a plastoquinol + NAD(+) + n H(+)(out). It catalyses the reaction a plastoquinone + NADPH + (n+1) H(+)(in) = a plastoquinol + NADP(+) + n H(+)(out). In terms of biological role, NDH shuttles electrons from NAD(P)H:plastoquinone, via FMN and iron-sulfur (Fe-S) centers, to quinones in the photosynthetic chain and possibly in a chloroplast respiratory chain. The immediate electron acceptor for the enzyme in this species is believed to be plastoquinone. Couples the redox reaction to proton translocation, and thus conserves the redox energy in a proton gradient. The polypeptide is NAD(P)H-quinone oxidoreductase subunit 6, chloroplastic (ndhG) (Lobularia maritima (Sweet alyssum)).